A 365-amino-acid polypeptide reads, in one-letter code: Mannitol dehydrogenase (365 aa).

Zn(2+)-binding residues include Cys50, His72, Cys103, Cys106, Cys109, Cys117, and Cys166.

It belongs to the zinc-containing alcohol dehydrogenase family. Zn(2+) is required as a cofactor.

Its subcellular location is the cytoplasm. It carries out the reaction D-mannitol + NAD(+) = D-mannose + NADH + H(+). Functionally, oxidizes mannitol to mannose. Provides the initial step by which translocated mannitol is committed to central metabolism and, by regulating mannitol pool size, is important in regulating salt tolerance at the cellular level. This is Mannitol dehydrogenase (MTD) from Apium graveolens (Celery).